The chain runs to 217 residues: 3,4-dihydroxy-2-butanone 4-phosphate synthase (217 aa).

D-ribulose 5-phosphate-binding positions include 37–38 (RE), aspartate 42, 150–154 (RQGHT), and glutamate 174. Mg(2+) is bound at residue glutamate 38. Histidine 153 is a Mg(2+) binding site.

The protein belongs to the DHBP synthase family. Homodimer. Requires Mg(2+) as cofactor. It depends on Mn(2+) as a cofactor.

It catalyses the reaction D-ribulose 5-phosphate = (2S)-2-hydroxy-3-oxobutyl phosphate + formate + H(+). It participates in cofactor biosynthesis; riboflavin biosynthesis; 2-hydroxy-3-oxobutyl phosphate from D-ribulose 5-phosphate: step 1/1. Its function is as follows. Catalyzes the conversion of D-ribulose 5-phosphate to formate and 3,4-dihydroxy-2-butanone 4-phosphate. In Photorhabdus laumondii subsp. laumondii (strain DSM 15139 / CIP 105565 / TT01) (Photorhabdus luminescens subsp. laumondii), this protein is 3,4-dihydroxy-2-butanone 4-phosphate synthase.